A 312-amino-acid polypeptide reads, in one-letter code: MIGSVKRPVVSCVLPEFDFTESTGLGKKSSSVKLPVNFGAFGSGGGEVKLGFLAPIKATEGSKTSSFQVNGKVDNFRHLQPSDCNSNSDSSLNNCNGFPGKKILQTTTVGNSTNILWHKCAVEKSERQEPLQQRGCVIWITGLSGSGKSTLACALSRGLHAKGKLTYILDGDNVRHGLNSDLSFKAEDRAENIRRIGEVAKLFADAGVICIASLISPYRKPPDACRSLLPEGDFIEVFMDVPLKVCEARDPKGLYKLARAGKIKGFTGIDDPYEPPLKSEIVLHQKLGMCDSPCDLADIVISYLEENGYLKA.

ATP is bound at residue 142-149 (GLSGSGKS). Catalysis depends on serine 216, which acts as the Phosphoserine intermediate.

The protein belongs to the APS kinase family.

It is found in the plastid. The protein localises to the chloroplast. It catalyses the reaction adenosine 5'-phosphosulfate + ATP = 3'-phosphoadenylyl sulfate + ADP + H(+). Its pathway is sulfur metabolism; hydrogen sulfide biosynthesis; sulfite from sulfate: step 2/3. Its function is as follows. Catalyzes the synthesis of activated sulfate. In Catharanthus roseus (Madagascar periwinkle), this protein is Adenylyl-sulfate kinase, chloroplastic (AKN).